An 878-amino-acid polypeptide reads, in one-letter code: Probable outer membrane protein PmpI (878 aa).

An N-terminal signal peptide occupies residues 1–24; sequence MRPDHMNFCCLCAAILSSTAVLFG. Positions 360-371 are enriched in low complexity; it reads SSKESPLPSSLQ. The tract at residues 360-381 is disordered; that stretch reads SSKESPLPSSLQASVTSPTPAT. Residues 372 to 381 show a composition bias toward polar residues; that stretch reads ASVTSPTPAT. An Autotransporter domain is found at 602–878; sequence GGAYLFGTWG…SLDLGTTYRF (277 aa).

The protein belongs to the PMP outer membrane protein family.

Its subcellular location is the secreted. It localises to the cell wall. The protein localises to the cell outer membrane. This is Probable outer membrane protein PmpI (pmpI) from Chlamydia trachomatis serovar D (strain ATCC VR-885 / DSM 19411 / UW-3/Cx).